Consider the following 305-residue polypeptide: Protein-methionine-sulfoxide reductase catalytic subunit MsrP (305 aa).

Positions 1–54 form a signal peptide, tat-type signal; it reads MLIRKPADHLPSEITSESVYFNRRQFMAGAAGLLLSAETLAGLAAKKSPLSQLA. Residues Asn69, 72 to 73, Cys126, Thr161, Asn209, Arg214, and 225 to 227 contribute to the Mo-molybdopterin site; these read YE and SIK.

It belongs to the MsrP family. In terms of assembly, heterodimer of a catalytic subunit (MsrP) and a heme-binding subunit (MsrQ). It depends on Mo-molybdopterin as a cofactor. Post-translationally, predicted to be exported by the Tat system. The position of the signal peptide cleavage has not been experimentally proven.

Its subcellular location is the periplasm. The enzyme catalyses L-methionyl-[protein] + a quinone + H2O = L-methionyl-(S)-S-oxide-[protein] + a quinol. It carries out the reaction L-methionyl-[protein] + a quinone + H2O = L-methionyl-(R)-S-oxide-[protein] + a quinol. Part of the MsrPQ system that repairs oxidized periplasmic proteins containing methionine sulfoxide residues (Met-O), using respiratory chain electrons. Thus protects these proteins from oxidative-stress damage caused by reactive species of oxygen and chlorine generated by the host defense mechanisms. MsrPQ is essential for the maintenance of envelope integrity under bleach stress, rescuing a wide series of structurally unrelated periplasmic proteins from methionine oxidation. The catalytic subunit MsrP is non-stereospecific, being able to reduce both (R-) and (S-) diastereoisomers of methionine sulfoxide. The protein is Protein-methionine-sulfoxide reductase catalytic subunit MsrP of Chromobacterium violaceum (strain ATCC 12472 / DSM 30191 / JCM 1249 / CCUG 213 / NBRC 12614 / NCIMB 9131 / NCTC 9757 / MK).